The chain runs to 171 residues: Neudesin (171 aa).

Positions 1-30 (MARPAPWWWLRPLAALALALALVRVPSARA) are cleaved as a signal peptide. Residues 43-128 (VRLFTEEELA…KELEALDDIF (86 aa)) form the Cytochrome b5 heme-binding domain. Lysine 135 bears the N6-acetyllysine mark. Residues 151–171 (GSPNLDFKPEDQPHFDIKDEF) are disordered. Basic and acidic residues predominate over residues 157–171 (FKPEDQPHFDIKDEF).

This sequence belongs to the cytochrome b5 family. MAPR subfamily. Interacts with PINK1 and PARK7.

Its subcellular location is the secreted. The protein resides in the extracellular space. The protein localises to the mitochondrion. It localises to the endoplasmic reticulum. In terms of biological role, acts as a neurotrophic factor in postnatal mature neurons enhancing neuronal survival. Promotes cell proliferation and neurogenesis in undifferentiated neural progenitor cells at the embryonic stage and inhibits differentiation of astrocytes. Its neurotrophic activity is exerted via MAPK1/ERK2, MAPK3/ERK1 and AKT1/AKT pathways. Neurotrophic activity is enhanced by binding to heme. Also acts as an anorexigenic neurotrophic factor that contributes to energy balance. The polypeptide is Neudesin (Rattus norvegicus (Rat)).